We begin with the raw amino-acid sequence, 248 residues long: Putative amino-acid ABC transporter-binding protein PatH (248 aa).

A signal peptide spans 1–21 (MKNWIKVAVAAIALSAATVQA).

It belongs to the bacterial solute-binding protein 3 family.

It is found in the periplasm. In terms of biological role, probably part of a binding-protein-dependent transport system for an amino acid. This Vibrio harveyi (Beneckea harveyi) protein is Putative amino-acid ABC transporter-binding protein PatH (patH).